The primary structure comprises 265 residues: tRNA (guanine-N(1)-)-methyltransferase (265 aa).

S-adenosyl-L-methionine is bound by residues Gly-110 and 129 to 134 (LGDFVM). The segment at 243 to 265 (LAAWGAPPPPLPKRRRGAKPNPN) is disordered. Basic residues predominate over residues 254–265 (PKRRRGAKPNPN).

It belongs to the RNA methyltransferase TrmD family. In terms of assembly, homodimer.

The protein resides in the cytoplasm. It carries out the reaction guanosine(37) in tRNA + S-adenosyl-L-methionine = N(1)-methylguanosine(37) in tRNA + S-adenosyl-L-homocysteine + H(+). Specifically methylates guanosine-37 in various tRNAs. The sequence is that of tRNA (guanine-N(1)-)-methyltransferase from Deinococcus geothermalis (strain DSM 11300 / CIP 105573 / AG-3a).